Here is a 2531-residue protein sequence, read N- to C-terminus: Highly reducing polyketide synthase ausV (2531 aa).

Positions Ser-7–Thr-432 constitute a Ketosynthase family 3 (KS3) domain. Residues Cys-180, His-315, and His-355 each act as for beta-ketoacyl synthase activity in the active site. Residues Phe-554–Ser-882 form a malonyl-CoA:ACP transacylase (MAT) domain region. Ser-644 serves as the catalytic For malonyltransferase activity. Residues His-939–Asp-1069 form an N-terminal hotdog fold region. One can recognise a PKS/mFAS DH domain in the interval His-939–Asp-1238. The tract at residues Asp-940–Ser-1236 is dehydratase (DH) domain. Catalysis depends on His-971, which acts as the Proton acceptor; for dehydratase activity. Residues Tyr-1087 to Asp-1238 are C-terminal hotdog fold. Asp-1152 acts as the Proton donor; for dehydratase activity in catalysis. The interval Ser-1414–Ser-1592 is methyltransferase (CMet) domain. An enoyl reductase (ER) domain region spans residues Leu-1832 to Arg-2133. Residues His-2156 to Ile-2331 are ketoreductase (KR) domain. One can recognise a Carrier domain in the interval Ala-2444 to Ser-2521. Position 2481 is an O-(pantetheine 4'-phosphoryl)serine (Ser-2481).

Its pathway is secondary metabolite biosynthesis; terpenoid biosynthesis. In terms of biological role, highly reducing polyketide synthase; part of the gene cluster that mediates the biosynthesis of calidodehydroaustin, a fungal meroterpenoid. The first step of the pathway is the synthesis of 3,5-dimethylorsellinic acid by the polyketide synthase ausA. 3,5-dimethylorsellinic acid is then prenylated by the polyprenyl transferase ausN. Further epoxidation by the FAD-dependent monooxygenase ausM and cyclization by the probable terpene cyclase ausL lead to the formation of protoaustinoid A. Protoaustinoid A is then oxidized to spiro-lactone preaustinoid A3 by the combined action of the FAD-binding monooxygenases ausB and ausC, and the dioxygenase ausE. Acid-catalyzed keto-rearrangement and ring contraction of the tetraketide portion of preaustinoid A3 by ausJ lead to the formation of preaustinoid A4. The aldo-keto reductase ausK, with the help of ausH, is involved in the next step by transforming preaustinoid A4 into isoaustinone which is in turn hydroxylated by the P450 monooxygenase ausI to form austinolide. The cytochrome P450 monooxygenase ausG modifies austinolide to austinol. Austinol is further acetylated to austin by the O-acetyltransferase ausP, which spontaneously changes to dehydroaustin. The cytochrome P450 monooxygenase ausR then converts dehydroaustin is into 7-dehydrodehydroaustin. The hydroxylation catalyzed by ausR permits the O-acetyltransferase ausQ to add an additional acetyl group to the molecule, leading to the formation of acetoxydehydroaustin. The short chain dehydrogenase ausT catalyzes the reduction of the double bond present between carbon atoms 1 and 2 to convert 7-dehydrodehydroaustin into 1,2-dihydro-7-hydroxydehydroaustin. AusQ catalyzes not only an acetylation reaction but also the addition of the PKS ausV diketide product to 1,2-dihydro-7-hydroxydehydroaustin, forming precalidodehydroaustin. Finally, the iron/alpha-ketoglutarate-dependent dioxygenase converts precalidodehydroaustin into calidodehydroaustin. The chain is Highly reducing polyketide synthase ausV from Aspergillus calidoustus.